A 497-amino-acid polypeptide reads, in one-letter code: Transmembrane protein 200A (497 aa).

Residues 1-61 lie on the Cytoplasmic side of the membrane; sequence MIATGGVITG…RGKIRLYSAS (61 aa). The span at 20 to 30 shows a compositional bias: polar residues; it reads TRSQYHLSAQS. The interval 20–44 is disordered; sequence TRSQYHLSAQSPGPAPEKKTTKRKP. The chain crosses the membrane as a helical span at residues 62–82; that stretch reads GFFLVLGVLILMAGIAMAVLG. Residues 83-127 are Extracellular-facing; the sequence is YWPHKDQPKAPETKMSANNTQSFGREQAGSIAQFLEQHMHSEKMK. N-linked (GlcNAc...) asparagine glycosylation occurs at asparagine 100. Residues 128-148 form a helical membrane-spanning segment; it reads MLGPFTMGIGIFIFICANAIL. Topologically, residues 149-497 are cytoplasmic; the sequence is HENRDRETKV…LKRGTSETRF (349 aa). Low complexity predominate over residues 353–375; sequence SNSATESASSTSSRSSLSPGSTS. 2 disordered regions span residues 353–385 and 400–438; these read SNSATESASSTSSRSSLSPGSTSGRFLSPGAAR and HSKSLDLERGPTKLTVQPEQRKHPSWPRLDRSNSKGYTR. Residues 427–438 show a composition bias toward basic and acidic residues; that stretch reads RLDRSNSKGYTR.

It belongs to the TMEM200 family.

The protein localises to the membrane. The polypeptide is Transmembrane protein 200A (tmem200a) (Danio rerio (Zebrafish)).